The primary structure comprises 126 residues: Protein ApaG (126 aa).

Residues 2-126 (NQRLSPIKVE…FSLAVPGLLH (125 aa)) form the ApaG domain.

This Shewanella piezotolerans (strain WP3 / JCM 13877) protein is Protein ApaG.